A 517-amino-acid polypeptide reads, in one-letter code: Bifunctional purine biosynthesis protein PurH (517 aa).

The MGS-like domain maps to 1–151; that stretch reads MTQERKIKRA…KNFAHVAVLC (151 aa).

This sequence belongs to the PurH family.

The enzyme catalyses (6R)-10-formyltetrahydrofolate + 5-amino-1-(5-phospho-beta-D-ribosyl)imidazole-4-carboxamide = 5-formamido-1-(5-phospho-D-ribosyl)imidazole-4-carboxamide + (6S)-5,6,7,8-tetrahydrofolate. The catalysed reaction is IMP + H2O = 5-formamido-1-(5-phospho-D-ribosyl)imidazole-4-carboxamide. It functions in the pathway purine metabolism; IMP biosynthesis via de novo pathway; 5-formamido-1-(5-phospho-D-ribosyl)imidazole-4-carboxamide from 5-amino-1-(5-phospho-D-ribosyl)imidazole-4-carboxamide (10-formyl THF route): step 1/1. It participates in purine metabolism; IMP biosynthesis via de novo pathway; IMP from 5-formamido-1-(5-phospho-D-ribosyl)imidazole-4-carboxamide: step 1/1. The protein is Bifunctional purine biosynthesis protein PurH of Elusimicrobium minutum (strain Pei191).